The chain runs to 197 residues: Recombination protein RecR (197 aa).

Residues 55–70 (CVQCRDFTESEICTIC) form a C4-type zinc finger. Residues 78–173 (QQLCVVESPA…RPSRLAQGMP (96 aa)) enclose the Toprim domain.

It belongs to the RecR family.

Functionally, may play a role in DNA repair. It seems to be involved in an RecBC-independent recombinational process of DNA repair. It may act with RecF and RecO. The sequence is that of Recombination protein RecR from Xanthomonas oryzae pv. oryzae (strain MAFF 311018).